Consider the following 391-residue polypeptide: MRSLFTRFFQLEAASGLLLIAAAVLALIINNSPLSYLYSGLLDVPVAVQIGALNIAKPLLLWINDGLMALFFLLIGLEVKREVVDGHLSKPSQVILPATAAVGGMVVPALIYWFINRDNPAAVAGWAIPTATDIAFALGVLALLGKRVPVSLKLFLMTLAIIDDLGAIIVIALFYSGTLSSVSLLLAAACLVVLIAMNRLGVVKLGPYMVIGLILWVCVLKSGVHATLAGVALALCIPLRTRNAETSPLLALEHALHPWVAYAILPLFAFANAGVSLAGMTVESFTHPVPMGIAVGLLLGKTVGVFGLTWLAVKLRLAALPAGAGWGQILGVAILCGIGFTMSLFVGSLAFSPGSSEYAGMDRMGILTGSFFAAVIGYAVTAMASRKPRVG.

Helical transmembrane passes span 9 to 29 (FQLE…ALII), 36 to 56 (YLYS…LNIA), 59 to 79 (LLLW…GLEV), 95 to 115 (ILPA…YWFI), 123 to 143 (VAGW…VLAL), 154 to 174 (LFLM…IALF), 177 to 197 (GTLS…LIAM), 213 to 235 (LILW…ALAL), 259 to 279 (WVAY…SLAG), 293 to 313 (IAVG…WLAV), 329 to 349 (ILGV…VGSL), and 364 to 384 (MGIL…TAMA).

It belongs to the NhaA Na(+)/H(+) (TC 2.A.33) antiporter family.

The protein localises to the cell inner membrane. It catalyses the reaction Na(+)(in) + 2 H(+)(out) = Na(+)(out) + 2 H(+)(in). Its function is as follows. Na(+)/H(+) antiporter that extrudes sodium in exchange for external protons. The protein is Na(+)/H(+) antiporter NhaA of Pseudomonas putida (strain GB-1).